Here is a 681-residue protein sequence, read N- to C-terminus: PTS system glucose-specific EIICBA component (681 aa).

In terms of domain architecture, PTS EIIC type-1 spans 3-414; the sequence is KKLFGQLQRI…LKYKTPGRED (412 aa). The next 10 helical transmembrane spans lie at 16–36, 73–93, 126–146, 170–190, 199–219, 273–293, 303–323, 328–348, 355–375, and 383–403; these read LMLP…GTAM, MIFA…AAIA, ILGI…GALA, FVPI…ALIW, AFST…FGFI, FMQG…LAIY, VVAG…ITEP, FLFV…LSFL, LHLG…GILP, and VIPV…FLIV. Positions 425 to 506 constitute a PTS EIIB type-1 domain; that stretch reads TELPYAVLEA…QQIMNGQVVE (82 aa). C447 acts as the Phosphocysteine intermediate; for EIIB activity in catalysis. In terms of domain architecture, PTS EIIA type-1 spans 551-655; it reads DQVFSEKMMG…SDITPIIVTQ (105 aa). Residue H603 is the Tele-phosphohistidine intermediate; for EIIA activity of the active site.

Its subcellular location is the cell membrane. It carries out the reaction N(pros)-phospho-L-histidyl-[protein] + D-glucose(out) = D-glucose 6-phosphate(in) + L-histidyl-[protein]. Functionally, the phosphoenolpyruvate-dependent sugar phosphotransferase system (sugar PTS), a major carbohydrate active transport system, catalyzes the phosphorylation of incoming sugar substrates concomitantly with their translocation across the cell membrane. This system is involved in glucose transport. The chain is PTS system glucose-specific EIICBA component (ptsG) from Staphylococcus aureus (strain MRSA252).